The following is a 204-amino-acid chain: Protein GrpE (204 aa).

2 stretches are compositionally biased toward basic and acidic residues: residues 1 to 21 (MEEL…EVKG) and 36 to 46 (EEKIETEVEQK). Positions 1 to 46 (MEELEKDKIERNEEMSEEVKGEGPPSELEQSEEVVEEKIETEVEQK) are disordered.

The protein belongs to the GrpE family. In terms of assembly, homodimer.

It localises to the cytoplasm. Participates actively in the response to hyperosmotic and heat shock by preventing the aggregation of stress-denatured proteins, in association with DnaK and GrpE. It is the nucleotide exchange factor for DnaK and may function as a thermosensor. Unfolded proteins bind initially to DnaJ; upon interaction with the DnaJ-bound protein, DnaK hydrolyzes its bound ATP, resulting in the formation of a stable complex. GrpE releases ADP from DnaK; ATP binding to DnaK triggers the release of the substrate protein, thus completing the reaction cycle. Several rounds of ATP-dependent interactions between DnaJ, DnaK and GrpE are required for fully efficient folding. This Caldanaerobacter subterraneus subsp. tengcongensis (strain DSM 15242 / JCM 11007 / NBRC 100824 / MB4) (Thermoanaerobacter tengcongensis) protein is Protein GrpE.